The primary structure comprises 304 residues: Aspartate carbamoyltransferase catalytic subunit (304 aa).

Arg54 and Thr55 together coordinate carbamoyl phosphate. Residue Lys83 participates in L-aspartate binding. Residues Arg104, His132, and Gln135 each coordinate carbamoyl phosphate. 2 residues coordinate L-aspartate: Arg165 and Arg226. Residues Leu265 and Pro266 each contribute to the carbamoyl phosphate site.

It belongs to the aspartate/ornithine carbamoyltransferase superfamily. ATCase family. As to quaternary structure, heterooligomer of catalytic and regulatory chains.

The catalysed reaction is carbamoyl phosphate + L-aspartate = N-carbamoyl-L-aspartate + phosphate + H(+). Its pathway is pyrimidine metabolism; UMP biosynthesis via de novo pathway; (S)-dihydroorotate from bicarbonate: step 2/3. In terms of biological role, catalyzes the condensation of carbamoyl phosphate and aspartate to form carbamoyl aspartate and inorganic phosphate, the committed step in the de novo pyrimidine nucleotide biosynthesis pathway. The sequence is that of Aspartate carbamoyltransferase catalytic subunit from Pyrobaculum islandicum (strain DSM 4184 / JCM 9189 / GEO3).